The chain runs to 592 residues: Tegument protein US23 (592 aa).

The tract at residues 407–491 is disordered; that stretch reads PRSLGDGEEE…NNVVPNVERR (85 aa). The span at 460 to 481 shows a compositional bias: acidic residues; that stretch reads ADDEEQGEDDDDSGAEPMEPEE.

This sequence belongs to the herpesviridae US22 family.

It localises to the virion tegument. In Homo sapiens (Human), this protein is Tegument protein US23 (US23).